The primary structure comprises 554 residues: Urocanate hydratase (554 aa).

NAD(+) contacts are provided by residues 52 to 53, glutamine 130, 176 to 178, glutamate 196, arginine 201, 242 to 243, 263 to 267, 273 to 274, and tyrosine 322; these read GG, GMG, NA, QTSAH, and YL. The active site involves cysteine 410. Glycine 492 provides a ligand contact to NAD(+).

It belongs to the urocanase family. Requires NAD(+) as cofactor.

The protein localises to the cytoplasm. The enzyme catalyses 4-imidazolone-5-propanoate = trans-urocanate + H2O. The protein operates within amino-acid degradation; L-histidine degradation into L-glutamate; N-formimidoyl-L-glutamate from L-histidine: step 2/3. In terms of biological role, catalyzes the conversion of urocanate to 4-imidazolone-5-propionate. This chain is Urocanate hydratase, found in Shewanella halifaxensis (strain HAW-EB4).